Here is a 307-residue protein sequence, read N- to C-terminus: Type 2A encapsulin shell protein (307 aa).

This sequence belongs to the encapsulin family. Family 2A subfamily. As to quaternary structure, the encapsulin nanocompartment is formed by 60 subunits; monomers form pentamers which assemble to form shells. There are 12 charged pores where the pentamers meet as well as 3-fold axis channels and dimer channels. Isolated from bacteria in a complex with cysteine desulfurase (AC Q9KII6).

It is found in the encapsulin nanocompartment. Its subcellular location is the cell membrane. Its function is as follows. Shell component of a type 2A encapsulin nanocompartment. Forms encapsulin nanocompartments about 24 nm in diameter from 60 monomers, probably involved in sulfur metabolism. Probably encapsulates cysteine desulfurase. The protein is Type 2A encapsulin shell protein of Mycolicibacterium paratuberculosis (strain ATCC BAA-968 / K-10) (Mycobacterium paratuberculosis).